Here is a 61-residue protein sequence, read N- to C-terminus: Small ribosomal subunit protein uS14 (61 aa).

Positions 24, 27, 40, and 43 each coordinate Zn(2+).

The protein belongs to the universal ribosomal protein uS14 family. Zinc-binding uS14 subfamily. Part of the 30S ribosomal subunit. Contacts proteins S3 and S10. The cofactor is Zn(2+).

Functionally, binds 16S rRNA, required for the assembly of 30S particles and may also be responsible for determining the conformation of the 16S rRNA at the A site. This chain is Small ribosomal subunit protein uS14, found in Nautilia profundicola (strain ATCC BAA-1463 / DSM 18972 / AmH).